We begin with the raw amino-acid sequence, 585 residues long: Protein DENND6B (585 aa).

Residues 1–10 (MEVPVGPGPR) are compositionally biased toward low complexity. Residues 1–25 (MEVPVGPGPRQAGGGLGATRSSSSG) form a disordered region. Residues 43–221 (ECVCVVTFDL…IQVRIPSRVD (179 aa)) enclose the uDENN domain. The region spanning 246–373 (VHELDLFRCF…VKLKKPSRLK (128 aa)) is the cDENN domain. One can recognise a dDENN domain in the interval 375–499 (LDTKPGLYTS…KSPHFDGWYR (125 aa)).

It belongs to the DENND6 family.

It localises to the recycling endosome. Its subcellular location is the cytoplasm. Functionally, guanine nucleotide exchange factor (GEF) for RAB14. Also has some, lesser GEF activity towards RAB35. The sequence is that of Protein DENND6B (Dennd6b) from Mus musculus (Mouse).